Here is a 634-residue protein sequence, read N- to C-terminus: MSDSFYRYDVIVIGGGHAGTEAALAAARAGARTLLLTHNIETVGAMSCNPAIGGIGKGHLVKEIDALGGAMAKAADLAGIQWRTLNASKGPAVRATRCQADRNLYRSAIRRIVEAQPNLTVFQAAVDDLIIHNGAAEGDSVRGVITQTGLRFEATAVVLTAGTFLAGKIHVGETQYAAGRMGDPPATTLAARLRERPFAIDRLKTGTPPRIDGRTLDYTMMDEQPGDDPLPVMSFMGQVSDHPTQVSCWITHTTEQTHDIIRGALHRSPLYSGQIEGIGPRYCPSIEDKVVRFADKTSHQIFVEPEGLDVTEIYPNGISTSLPFDVQLALVRSIRGFAQAHITRPGYAIEYDFFDPRGLKASLETKAVGGLFFAGQINGTTGYEEAAAQGLLAGLNAARHVQALPAWSPRRDEAYLGVLVDDLITHGTTEPYRMFTSRAEYRLQLREDNADLRLTGVGRAMGLVDDARWARFSSKQEAVQRETARLSALWATPGNALGREVVDTLGVPMSRETNVLDLIKRPELSYAALMRVPTLGPGVDDAQVAEQVEIGVKYAGYLDRQRDEIARQQRHETTPIPEGFDYAGVRGLSMEVQQKLERVRPQSIGQAQRIPGMTPAAISLLLVHLERARRSQVA.

An FAD-binding site is contributed by Gly14–Gly19. An NAD(+)-binding site is contributed by Gly279 to Phe293.

The protein belongs to the MnmG family. As to quaternary structure, homodimer. Heterotetramer of two MnmE and two MnmG subunits. FAD is required as a cofactor.

It localises to the cytoplasm. Its function is as follows. NAD-binding protein involved in the addition of a carboxymethylaminomethyl (cmnm) group at the wobble position (U34) of certain tRNAs, forming tRNA-cmnm(5)s(2)U34. The polypeptide is tRNA uridine 5-carboxymethylaminomethyl modification enzyme MnmG (Xanthomonas campestris pv. campestris (strain B100)).